We begin with the raw amino-acid sequence, 434 residues long: MVIKKVHSRQIFDSRGNPTVEVDLWTDKGMFRAAVPSGASTGIYEALEMRDKDAKNYHGKTLFNAVGNVNKIIAPALVDKKMDEKDQTAVDNFLLALDGTENKNKLGANAILGVSLAVCKAGAAAKGVPLYRHIADLAGNKEVILPVPAFNVINGGSHAGNKLAMQEFMILPTGAKNFTEAMKMGTEVYHHLKSVIKKKYGQDACNVGDEGGFAPNILDNKEGLELLKTAIANAGYTAEIEIGMDVAASEFCKEKKYDLDFKNPDSNPNDWLTSDQLADVYKDFVKNYPVVSIEDPFDQDDWEAYTKMTKDMDIQIVGDDLLVTNPKRVQKGIDLKAANALLLKVNQIGSVTESIQACKMSQDAGWGVMVSHRSGETEDTFIADLVVGLCTGQIKTGAPCRSERLAKYNQILRIEEELGDKAVFAGKKFRNPLK.

2 residues coordinate substrate: His158 and Glu167. Glu210 (proton donor) is an active-site residue. Mg(2+) contacts are provided by Asp245, Glu294, and Asp319. 2 residues coordinate substrate: Glu294 and Asp319. Catalysis depends on Lys344, which acts as the Proton acceptor. Substrate is bound by residues 371 to 374 (SHRS) and Lys395.

Belongs to the enolase family. In terms of assembly, homodimer. It depends on Mg(2+) as a cofactor.

The protein localises to the cytoplasm. It carries out the reaction (2R)-2-phosphoglycerate = phosphoenolpyruvate + H2O. It participates in carbohydrate degradation; glycolysis; pyruvate from D-glyceraldehyde 3-phosphate: step 4/5. The chain is Enolase from Doryteuthis pealeii (Longfin inshore squid).